The chain runs to 56 residues: Large ribosomal subunit protein bL32 (56 aa).

The disordered stretch occupies residues 1-26 (MAVQQNKKSRSKRGMRRSHDALSTAQ). A compositionally biased stretch (basic residues) spans 7–16 (KKSRSKRGMR).

Belongs to the bacterial ribosomal protein bL32 family.

The chain is Large ribosomal subunit protein bL32 from Shewanella baltica (strain OS155 / ATCC BAA-1091).